We begin with the raw amino-acid sequence, 60 residues long: Large ribosomal subunit protein uL30 (60 aa).

The protein belongs to the universal ribosomal protein uL30 family. Part of the 50S ribosomal subunit.

In Saccharopolyspora erythraea (strain ATCC 11635 / DSM 40517 / JCM 4748 / NBRC 13426 / NCIMB 8594 / NRRL 2338), this protein is Large ribosomal subunit protein uL30.